The sequence spans 491 residues: 3-octaprenyl-4-hydroxybenzoate carboxy-lyase (491 aa).

Position 172 (Asn-172) interacts with Mn(2+). Prenylated FMN-binding positions include 175–177 (IYR), 189–191 (RWL), and 194–195 (RG). Mn(2+) is bound at residue Glu-238. The active-site Proton donor is Asp-287.

This sequence belongs to the UbiD family. Homohexamer. Requires prenylated FMN as cofactor. Mn(2+) serves as cofactor.

The protein resides in the cell membrane. The enzyme catalyses a 4-hydroxy-3-(all-trans-polyprenyl)benzoate + H(+) = a 2-(all-trans-polyprenyl)phenol + CO2. It participates in cofactor biosynthesis; ubiquinone biosynthesis. Catalyzes the decarboxylation of 3-octaprenyl-4-hydroxy benzoate to 2-octaprenylphenol, an intermediate step in ubiquinone biosynthesis. In Histophilus somni (strain 129Pt) (Haemophilus somnus), this protein is 3-octaprenyl-4-hydroxybenzoate carboxy-lyase.